The following is a 209-amino-acid chain: Mitochondrial import inner membrane translocase subunit Tim23 (209 aa).

3 helical membrane-spanning segments follow: residues 73–93, 125–145, and 180–200; these read FELA…FGAL, ALWA…GVIV, and GGLA…WEHI.

The protein belongs to the Tim17/Tim22/Tim23 family. Component of the TIM23 complex at least composed of timm23, timm17 and timm50. The complex interacts with the timm44 component of the PAM complex.

Its subcellular location is the mitochondrion inner membrane. Its function is as follows. Essential component of the TIM23 complex, a complex that mediates the translocation of transit peptide-containing proteins across the mitochondrial inner membrane. The chain is Mitochondrial import inner membrane translocase subunit Tim23 (timm23) from Xenopus laevis (African clawed frog).